The sequence spans 450 residues: Transcription factor AP-2 gamma (450 aa).

Lys-10 is covalently cross-linked (Glycyl lysine isopeptide (Lys-Gly) (interchain with G-Cter in SUMO)). 2 disordered regions span residues Glu-13 to Pro-63 and Leu-90 to Pro-126. A PPxY motif motif is present at residues Tyr-59 to Tyr-64. The segment covering Pro-95–Glu-110 has biased composition (polar residues). At Ser-252 the chain carries Phosphoserine; by PKA. The tract at residues Arg-293–Asp-424 is H-S-H (helix-span-helix), dimerization. The segment at Gly-431–Lys-450 is disordered. Ser-434 is modified (phosphoserine). Positions Lys-440–Lys-450 are enriched in basic and acidic residues.

This sequence belongs to the AP-2 family. In terms of assembly, binds DNA as a dimer. Can form homodimers or heterodimers with other AP-2 family members. Interacts with WWOX. Interacts with UBE2I. Interacts with KCTD1; this interaction represses transcription activation. Interacts with CITED2 (via C-terminus); the interaction stimulates TFAP2B-transcriptional activity. Interacts with CITED4. Interacts with MTA1. In terms of processing, sumoylated on Lys-10; which inhibits transcriptional activity.

It localises to the nucleus. Its function is as follows. Sequence-specific DNA-binding transcription factor that interacts with cellular enhancer elements to regulate transcription of selected genes, and which plays a key role in early embryonic development. AP-2 factors bind to the consensus sequence 5'-GCCNNNGGC-3' and activate genes involved in a large spectrum of important biological functions. TFAP2C plays a key role in early embryonic development by regulating both inner cell mass (ICM) and trophectoderm differentiation. At the 8-cell stage, during morula development, controls expression of cell-polarity genes. Upon trophoblast commitment, binds to late trophectoderm genes in blastocysts together with CDX2, and later to extra-embryonic ectoderm genes together with SOX2. Binds to both closed and open chromatin with other transcription factors. Involved in the MTA1-mediated epigenetic regulation of ESR1 expression in breast cancer. The polypeptide is Transcription factor AP-2 gamma (TFAP2C) (Homo sapiens (Human)).